The primary structure comprises 1506 residues: Condensin-2 complex subunit D3 (1506 aa).

The interval Ser154–Arg194 is disordered. HEAT repeat units follow at residues His442 to Ser476, Pro532 to Cys567, and Gln574 to Gln605. Ser562 is modified (phosphoserine). Positions Ser884–Leu897 are enriched in polar residues. The disordered stretch occupies residues Ser884 to Ser908. The HEAT 4 repeat unit spans residues Thr968–Glu1004. Positions Ala1213–Thr1270 form a coiled coil. A disordered region spans residues Gln1317 to Ser1353. Over residues Pro1324–Pro1338 the composition is skewed to polar residues. Residues Ser1359, Ser1368, Ser1381, and Ser1393 each carry the phosphoserine modification. Disordered regions lie at residues Leu1385–Arg1412 and Pro1473–Asn1506. Over residues Ser1393–Ser1405 the composition is skewed to low complexity. Basic residues predominate over residues Ser1492–Asn1506.

In terms of assembly, component of the condensin-2 complex, which contains the SMC2 and SMC4 heterodimer, and 3 non SMC subunits that probably regulate the complex: NCAPH2, NCAPD3 and NCAPG2.

It is found in the nucleus. In terms of biological role, regulatory subunit of the condensin-2 complex, a complex which establishes mitotic chromosome architecture and is involved in physical rigidity of the chromatid axis. May promote the resolution of double-strand DNA catenanes (intertwines) between sister chromatids. Condensin-mediated compaction likely increases tension in catenated sister chromatids, providing directionality for type II topoisomerase-mediated strand exchanges toward chromatid decatenation. Specifically required for decatenation of centromeric ultrafine DNA bridges during anaphase. Early in neurogenesis, may play an essential role to ensure accurate mitotic chromosome condensation in neuron stem cells, ultimately affecting neuron pool and cortex size. This chain is Condensin-2 complex subunit D3 (Ncapd3), found in Mus musculus (Mouse).